A 67-amino-acid polypeptide reads, in one-letter code: Beta-defensin 123 (67 aa).

Positions 1–20 are cleaved as a signal peptide; that stretch reads MKLLLLTLTVLLLLSQLTPG. 3 cysteine pairs are disulfide-bonded: C25–C52, C32–C46, and C36–C53.

The protein belongs to the beta-defensin family. Abundant expression in the male reproductive tract only. Expressed abundantly in testis, while expression in epididymis decreased gradually from caput to cauda.

The protein localises to the secreted. Its function is as follows. Has antibacterial activity. This Macaca mulatta (Rhesus macaque) protein is Beta-defensin 123 (DEFB123).